The primary structure comprises 185 residues: Photosystem I assembly protein Ycf4 (185 aa).

2 helical membrane-spanning segments follow: residues Y24 to S44 and I66 to V86.

Belongs to the Ycf4 family.

Its subcellular location is the cellular thylakoid membrane. Seems to be required for the assembly of the photosystem I complex. The chain is Photosystem I assembly protein Ycf4 from Prochlorococcus marinus (strain MIT 9301).